Here is a 133-residue protein sequence, read N- to C-terminus: MADAFAGTWKLVDSKNFDDYMKSIGVGFATRQVASMTKPTTIIEINGDTIILKTQSTFKNTEISFKLGVELDKTTADDRKVKSTVTLDGGKLVHVQKWDGQETKLVRELVDGKLILTLTHNNVVCTRTYEKEA.

N-acetylalanine is present on A2. Residue T8 is modified to Phosphothreonine. Y20 is subject to Phosphotyrosine; by Tyr-kinases. The residue at position 23 (S23) is a Phosphoserine. Residue T30 is modified to Phosphothreonine. The residue at position 83 (S83) is a Phosphoserine. 127–129 contributes to the (9Z)-octadecenoate binding site; sequence RTY. 127–129 serves as a coordination point for hexadecanoate; the sequence is RTY. 127 to 129 provides a ligand contact to octadecanoate; that stretch reads RTY.

Belongs to the calycin superfamily. Fatty-acid binding protein (FABP) family.

It localises to the cytoplasm. Its function is as follows. FABPs are thought to play a role in the intracellular transport of long-chain fatty acids and their acyl-CoA esters. FABPs are important elements related to the hibernating state in mammals. The chain is Fatty acid-binding protein, heart (FABP3) from Myotis lucifugus (Little brown bat).